A 143-amino-acid chain; its full sequence is Large ribosomal subunit protein uL13 (143 aa).

Belongs to the universal ribosomal protein uL13 family. In terms of assembly, part of the 50S ribosomal subunit.

Its function is as follows. This protein is one of the early assembly proteins of the 50S ribosomal subunit, although it is not seen to bind rRNA by itself. It is important during the early stages of 50S assembly. This chain is Large ribosomal subunit protein uL13, found in Symbiobacterium thermophilum (strain DSM 24528 / JCM 14929 / IAM 14863 / T).